A 281-amino-acid polypeptide reads, in one-letter code: uncharacterized protein (281 aa).

This is an uncharacterized protein from Mycoplasma genitalium (strain ATCC 33530 / DSM 19775 / NCTC 10195 / G37) (Mycoplasmoides genitalium).